A 97-amino-acid chain; its full sequence is MKIRPLHDRVIIKRIEAEAKSAGGIILAGTAAQKSTRGEVLAVGTGRILDNGDVKALAVKVGDKVIFNEGYGVKTEKLDGQDVLILSETDILAIVEA.

It belongs to the GroES chaperonin family. As to quaternary structure, heptamer of 7 subunits arranged in a ring. Interacts with the chaperonin GroEL.

It is found in the cytoplasm. Functionally, together with the chaperonin GroEL, plays an essential role in assisting protein folding. The GroEL-GroES system forms a nano-cage that allows encapsulation of the non-native substrate proteins and provides a physical environment optimized to promote and accelerate protein folding. GroES binds to the apical surface of the GroEL ring, thereby capping the opening of the GroEL channel. The protein is Co-chaperonin GroES of Aeromonas salmonicida.